Here is a 213-residue protein sequence, read N- to C-terminus: Thiamine-phosphate synthase (213 aa).

4-amino-2-methyl-5-(diphosphooxymethyl)pyrimidine-binding positions include 43-47 (QLRDK) and Asn-74. Positions 75 and 94 each coordinate Mg(2+). Ser-113 lines the 4-amino-2-methyl-5-(diphosphooxymethyl)pyrimidine pocket. 142–144 (TAT) is a binding site for 2-[(2R,5Z)-2-carboxy-4-methylthiazol-5(2H)-ylidene]ethyl phosphate. Lys-145 is a binding site for 4-amino-2-methyl-5-(diphosphooxymethyl)pyrimidine. 2-[(2R,5Z)-2-carboxy-4-methylthiazol-5(2H)-ylidene]ethyl phosphate is bound by residues Gly-173 and 193-194 (VS).

It belongs to the thiamine-phosphate synthase family. Mg(2+) is required as a cofactor.

The catalysed reaction is 2-[(2R,5Z)-2-carboxy-4-methylthiazol-5(2H)-ylidene]ethyl phosphate + 4-amino-2-methyl-5-(diphosphooxymethyl)pyrimidine + 2 H(+) = thiamine phosphate + CO2 + diphosphate. It catalyses the reaction 2-(2-carboxy-4-methylthiazol-5-yl)ethyl phosphate + 4-amino-2-methyl-5-(diphosphooxymethyl)pyrimidine + 2 H(+) = thiamine phosphate + CO2 + diphosphate. It carries out the reaction 4-methyl-5-(2-phosphooxyethyl)-thiazole + 4-amino-2-methyl-5-(diphosphooxymethyl)pyrimidine + H(+) = thiamine phosphate + diphosphate. It functions in the pathway cofactor biosynthesis; thiamine diphosphate biosynthesis; thiamine phosphate from 4-amino-2-methyl-5-diphosphomethylpyrimidine and 4-methyl-5-(2-phosphoethyl)-thiazole: step 1/1. Condenses 4-methyl-5-(beta-hydroxyethyl)thiazole monophosphate (THZ-P) and 2-methyl-4-amino-5-hydroxymethyl pyrimidine pyrophosphate (HMP-PP) to form thiamine monophosphate (TMP). This is Thiamine-phosphate synthase from Psychrobacter sp. (strain PRwf-1).